Reading from the N-terminus, the 197-residue chain is Putative phosphopantothenoylcysteine decarboxylase (197 aa).

Residues Phe-52 and 102–105 (SANT) each bind FMN. Residue Asn-139 participates in substrate binding. The active-site Proton donor is the Cys-174.

Belongs to the HFCD (homooligomeric flavin containing Cys decarboxylase) superfamily. In terms of assembly, homotrimer. FMN is required as a cofactor.

It carries out the reaction N-[(R)-4-phosphopantothenoyl]-L-cysteine + H(+) = (R)-4'-phosphopantetheine + CO2. The protein operates within cofactor biosynthesis; coenzyme A biosynthesis; CoA from (R)-pantothenate: step 3/5. In terms of biological role, necessary for the biosynthesis of coenzyme A. Catalyzes the decarboxylation of 4-phosphopantothenoylcysteine to form 4'-phosphopantotheine. The protein is Putative phosphopantothenoylcysteine decarboxylase (ppcdc) of Dictyostelium discoideum (Social amoeba).